The chain runs to 410 residues: Beta-arrestin-1 (410 aa).

The segment at 1-163 is interaction with SRC; the sequence is MGDKGTRVFK…LEEKIHKRNS (163 aa). An interaction with CHRM2 region spans residues 45–86; that stretch reads PEYLKERRVYVTLTCAFRYGREDLDVLGLTFRKDLFVANVQS. Y47 carries the phosphotyrosine modification. 1D-myo-inositol hexakisphosphate contacts are provided by K250, M255, K324, and K326. The tract at residues 318–410 is interaction with TRAF6; sequence IVSYKVKVKL…GTGSPQLNNR (93 aa). The short motif at 385-395 is the [DE]-X(1,2)-F-X-X-[FL]-X-X-X-R motif element; sequence RQRLKGMKDDK. Residues 389–410 form a disordered region; it reads KGMKDDKEEEENGTGSPQLNNR. Positions 401 to 410 are enriched in polar residues; the sequence is GTGSPQLNNR. Residue S404 is modified to Phosphoserine; by GRK5.

This sequence belongs to the arrestin family. As to quaternary structure, monomer. Homodimer. Homooligomer; the self-association is mediated by InsP6-binding. Heterooligomer with ARRB2; the association is mediated by InsP6-binding. Interacts with ADRB2 (phosphorylated). Interacts with CHRM2 (phosphorylated). Interacts with LHCGR. Interacts with CYTH2 and CASR. Interacts with AP2B1 (dephosphorylated); phosphorylation of AP2B1 disrupts the interaction. Interacts (dephosphorylated at Ser-404) with CLTC. Interacts with CCR2 and GRK2. Interacts with CRR5. Interacts with PTAFR (phosphorylated on serine residues). Interacts with CLTC and MAP2K3. Interacts with CREB1. Interacts with TRAF6. Interacts with IGF1R and MDM2. Interacts with C5AR1. Interacts with PDE4D. Interacts with SRC (via the SH3 domain and the protein kinase domain); the interaction is independent of the phosphorylation state of SRC C-terminus. Interacts with TACR1. Interacts with RAF1. Interacts with CHUK, IKBKB and MAP3K14. Interacts with DVL1; the interaction is enhanced by phosphorylation of DVL1. Interacts with DVL2; the interaction is enhanced by phosphorylation of DVL2. Interacts with IGF1R. Associates with MAP kinase p38. Part of a MAPK signaling complex consisting of TACR1, ARRB1, SRC, MAPK1 (activated) and MAPK3 (activated). Part of a MAPK signaling complex consisting of F2RL1, ARRB1, RAF1, MAPK1 (activated) and MAPK3 (activated). Interacts with GPR143. Interacts with MAP2K4/MKK4. Interacts with HCK and CXCR1 (phosphorylated). Interacts with ACKR3 and ACKR4. Interacts with ARRDC1; the interaction is direct. Interacts with GPR61, GPR62 and GPR135. In terms of processing, constitutively phosphorylated at in the cytoplasm. At the plasma membrane, is rapidly dephosphorylated, a process that is required for clathrin binding and ADRB2 endocytosis but not for ADRB2 binding and desensitization. Once internalized, is rephosphorylated. Post-translationally, the ubiquitination status appears to regulate the formation and trafficking of beta-arrestin-GPCR complexes and signaling. Ubiquitination appears to occur GPCR-specific. Ubiquitinated by MDM2; the ubiquitination is required for rapid internalization of ADRB2. Deubiquitinated by USP33; the deubiquitination leads to a dissociation of the beta-arrestin-GPCR complex. Stimulation of a class A GPCR, such as ADRB2, induces transient ubiquitination and subsequently promotes association with USP33.

Its subcellular location is the cytoplasm. The protein resides in the nucleus. It is found in the cell membrane. The protein localises to the membrane. It localises to the clathrin-coated pit. Its subcellular location is the cell projection. The protein resides in the pseudopodium. It is found in the cytoplasmic vesicle. Functions in regulating agonist-mediated G-protein coupled receptor (GPCR) signaling by mediating both receptor desensitization and resensitization processes. During homologous desensitization, beta-arrestins bind to the GPRK-phosphorylated receptor and sterically preclude its coupling to the cognate G-protein; the binding appears to require additional receptor determinants exposed only in the active receptor conformation. The beta-arrestins target many receptors for internalization by acting as endocytic adapters (CLASPs, clathrin-associated sorting proteins) and recruiting the GPRCs to the adapter protein 2 complex 2 (AP-2) in clathrin-coated pits (CCPs). However, the extent of beta-arrestin involvement appears to vary significantly depending on the receptor, agonist and cell type. Internalized arrestin-receptor complexes traffic to intracellular endosomes, where they remain uncoupled from G-proteins. Two different modes of arrestin-mediated internalization occur. Class A receptors, like ADRB2, OPRM1, ENDRA, D1AR and ADRA1B dissociate from beta-arrestin at or near the plasma membrane and undergo rapid recycling. Class B receptors, like AVPR2, AGTR1, NTSR1, TRHR and TACR1 internalize as a complex with arrestin and traffic with it to endosomal vesicles, presumably as desensitized receptors, for extended periods of time. Receptor resensitization then requires that receptor-bound arrestin is removed so that the receptor can be dephosphorylated and returned to the plasma membrane. Involved in internalization of P2RY4 and UTP-stimulated internalization of P2RY2. Involved in phosphorylation-dependent internalization of OPRD1 ands subsequent recycling. Involved in the degradation of cAMP by recruiting cAMP phosphodiesterases to ligand-activated receptors. Beta-arrestins function as multivalent adapter proteins that can switch the GPCR from a G-protein signaling mode that transmits short-lived signals from the plasma membrane via small molecule second messengers and ion channels to a beta-arrestin signaling mode that transmits a distinct set of signals that are initiated as the receptor internalizes and transits the intracellular compartment. Acts as a signaling scaffold for MAPK pathways such as MAPK1/3 (ERK1/2). ERK1/2 activated by the beta-arrestin scaffold is largely excluded from the nucleus and confined to cytoplasmic locations such as endocytic vesicles, also called beta-arrestin signalosomes. Recruits c-Src/SRC to ADRB2 resulting in ERK activation. GPCRs for which the beta-arrestin-mediated signaling relies on both ARRB1 and ARRB2 (codependent regulation) include ADRB2, F2RL1 and PTH1R. For some GPCRs the beta-arrestin-mediated signaling relies on either ARRB1 or ARRB2 and is inhibited by the other respective beta-arrestin form (reciprocal regulation). Inhibits ERK1/2 signaling in AGTR1- and AVPR2-mediated activation (reciprocal regulation). Is required for SP-stimulated endocytosis of NK1R and recruits c-Src/SRC to internalized NK1R resulting in ERK1/2 activation, which is required for the antiapoptotic effects of SP. Is involved in proteinase-activated F2RL1-mediated ERK activity. Acts as a signaling scaffold for the AKT1 pathway. Is involved in alpha-thrombin-stimulated AKT1 signaling. Is involved in IGF1-stimulated AKT1 signaling leading to increased protection from apoptosis. Involved in activation of the p38 MAPK signaling pathway and in actin bundle formation. Involved in F2RL1-mediated cytoskeletal rearrangement and chemotaxis. Involved in AGTR1-mediated stress fiber formation by acting together with GNAQ to activate RHOA. Appears to function as signaling scaffold involved in regulation of MIP-1-beta-stimulated CCR5-dependent chemotaxis. Involved in attenuation of NF-kappa-B-dependent transcription in response to GPCR or cytokine stimulation by interacting with and stabilizing CHUK. May serve as nuclear messenger for GPCRs. Involved in OPRD1-stimulated transcriptional regulation by translocating to CDKN1B and FOS promoter regions and recruiting EP300 resulting in acetylation of histone H4. Involved in regulation of LEF1 transcriptional activity via interaction with DVL1 and/or DVL2 Also involved in regulation of receptors other than GPCRs. Involved in Toll-like receptor and IL-1 receptor signaling through the interaction with TRAF6 which prevents TRAF6 autoubiquitination and oligomerization required for activation of NF-kappa-B and JUN. Involved in IL8-mediated granule release in neutrophils. Binds phosphoinositides. Binds inositolhexakisphosphate (InsP6). Required for atypical chemokine receptor ACKR2-induced RAC1-LIMK1-PAK1-dependent phosphorylation of cofilin (CFL1) and for the up-regulation of ACKR2 from endosomal compartment to cell membrane, increasing its efficiency in chemokine uptake and degradation. Involved in the internalization of the atypical chemokine receptor ACKR3. Negatively regulates the NOTCH signaling pathway by mediating the ubiquitination and degradation of NOTCH1 by ITCH. Participates in the recruitment of the ubiquitin-protein ligase to the receptor. This is Beta-arrestin-1 (ARRB1) from Macaca fascicularis (Crab-eating macaque).